Reading from the N-terminus, the 110-residue chain is Transcription factor S (110 aa).

The Zn(2+) site is built by C4, C7, C22, C25, C71, C74, C99, and C102. Residues 67–107 (TKVTCPKCGNDTAYWWEMQTRAGDEPSTIFYKCTKCGYTWR) form a TFIIS-type zinc finger.

The protein belongs to the archaeal rpoM/eukaryotic RPA12/RPB9/RPC11 RNA polymerase family.

It is found in the chromosome. Involved in transcriptional proofreading and fidelity. Induces RNA cleavage activity in RNA polymerase (RNAP). Stimulates transcription elongation by RNAP on both naked DNA and histone-bound DNA (chromatin), facilitating transcription through the histone barrier. Stimulation depends on transcript cleavage. In the presence of TFS, the cleavage activity of RNAP truncates RNA back to position +15 in a stepwise manner by releasing mainly dinucleotides from the 3'-end of the nascent RNA. The truncated RNAs are able to continue elongation. Misincorporation of nucleotides during elongation of transcription leads to arrested elongation complexes which are rescued by TFS-promoted removal of a dinucleotide from the 3'-end. TFS is able to induce a cleavage resynthesis cycle in stalled elongation complexes (resulting from the next missing nucleotide or a reduced incorporation rate of a wrong nucleotide) preventing misincorporation and enabling proofreading in a post-incorporation manner. Pausing of elongation complexes is the main determinant of TFS-induced RNA cleavage. The protein is Transcription factor S of Thermococcus kodakarensis (strain ATCC BAA-918 / JCM 12380 / KOD1) (Pyrococcus kodakaraensis (strain KOD1)).